The following is a 725-amino-acid chain: Threonine--tRNA ligase, cytoplasmic (725 aa).

The TGS domain occupies 80–142; sequence EPIQITLPDG…EGNAKLELLK (63 aa).

Belongs to the class-II aminoacyl-tRNA synthetase family.

The protein resides in the cytoplasm. It carries out the reaction tRNA(Thr) + L-threonine + ATP = L-threonyl-tRNA(Thr) + AMP + diphosphate + H(+). This is Threonine--tRNA ligase, cytoplasmic from Caenorhabditis elegans.